Reading from the N-terminus, the 125-residue chain is Protein ELF4-LIKE 1 (125 aa).

Polar residues predominate over residues 1–18 (MEASRNRSLVGNNRSPEM). The interval 1–28 (MEASRNRSLVGNNRSPEMNENDGEDVAA) is disordered.

Belongs to the EARLY FLOWERING 4 family. In terms of assembly, homodimer.

It is found in the nucleus. Its function is as follows. Component of the central CCA1/LHY-TOC1 feedback loop in the circadian clock that promotes clock accuracy and is required for sustained rhythms in the absence of daily light/dark cycles. The sequence is that of Protein ELF4-LIKE 1 (EFL1) from Arabidopsis thaliana (Mouse-ear cress).